We begin with the raw amino-acid sequence, 512 residues long: Tyrosine-protein kinase Lyn (512 aa).

Residues Met-1–Leu-50 form a disordered region. Residue Gly-2 is the site of N-myristoyl glycine attachment. Cys-3 is lipidated: S-palmitoyl cysteine. Residues Glu-63 to Thr-123 form the SH3 domain. One can recognise an SH2 domain in the interval Trp-129–Cys-226. Position 193 is a phosphotyrosine (Tyr-193). At Ser-228 the chain carries Phosphoserine. In terms of domain architecture, Protein kinase spans Ile-247–Tyr-501. Residues Leu-253–Val-261 and Lys-275 contribute to the ATP site. Tyr-306 and Tyr-316 each carry phosphotyrosine. The Proton acceptor role is filled by Asp-367. Tyr-397 carries the post-translational modification Phosphotyrosine; by autocatalysis. 2 positions are modified to phosphotyrosine: Tyr-460 and Tyr-473. Position 508 is a phosphotyrosine; by autocatalysis, CSK and MATK (Tyr-508).

It belongs to the protein kinase superfamily. Tyr protein kinase family. SRC subfamily. As to quaternary structure, interacts with TEC. Interacts (via SH2 domain) with FLT3 (tyrosine phosphorylated). Interacts with LIME1 and with CD79A upon activation of the B-cell antigen receptor. Interacts with the B-cell receptor complex. Interacts with phosphorylated THEMIS2. Interacts with EPOR. Interacts with MS4A2/FCER1B. Interaction (via the SH2 and SH3 domains) with MUC1 is stimulated by IL7 and the subsequent phosphorylation increases the binding between MUC1 and CTNNB1/beta-catenin. Interacts with ADAM15. Interacts with NDFIP2 and more weakly with NDFIP1. Interacts with FASLG. Interacts with KIT. Interacts with HCLS1. Interacts with FCGR2B. Interacts with FCGR1A; the interaction may be indirect. Interacts with CD19, CD22, CD79A and CD79B. Interacts (via SH3 domain) with CBLC, PPP1R15A and PDE4A. Interacts with TGFB1I1. Interacts (via SH3 domain) with PIK3R1, the regulatory subunit of phosphatidylinositol 3-kinase; this interaction enhances phosphatidylinositol 3-kinase activity. Interacts with CSF2RB, the common subunit of the IL3, IL5 and CSF2 receptors. Interacts with PAG1; identified in a complex with PAG1 and STAT3. Interacts with ABL1. Interacts with PTPN6/SHP-1. Interacts (via SH3 domain) with SCIMP (via proline-rich region). This interaction facilitates the phosphorylation of SCIMP 'Tyr-96', which enhances binding of SCIMP to TLR4, and consequently the phosphorylation of TLR4 in response to stimulation by lipopolysaccharide in macrophages. Interacts with LPXN (via LD motif 3) and the interaction is induced upon B-cell antigen receptor (BCR) activation. Interacts (via SH3-domain) with ANKRD54 (via ankyrin repeat region) in an activation-independent status of LYN. Forms a multiprotein complex with ANKRD54 and HCLS1. Interacts (via SH2 and SH3 domains) with UNC119; leading to LYN activation. Interacts with CD36. Interacts with LYN. Interacts with SKAP1 and FYB1; this interaction promotes the phosphorylation of CLNK. Interacts with BCAR1/CAS and NEDD9/HEF1. Ubiquitinated. Ubiquitination is SH3-dependent. In terms of processing, autophosphorylated. Phosphorylated on tyrosine residues in response to KIT signaling. Phosphorylation at Tyr-397 is required for optimal activity. Phosphorylation at Tyr-508 inhibits kinase activity. Phosphorylated at Tyr-508 by CSK. Dephosphorylated by PTPRC/CD45. Becomes rapidly phosphorylated upon activation of the B-cell receptor and the immunoglobulin receptor FCGR1A. Phosphorylated in response to integrin ITGB1 in B-cells. In terms of tissue distribution, detected in spleen (at protein level). Expressed predominantly in B-lymphoid and myeloid cells.

The protein localises to the cell membrane. It is found in the nucleus. Its subcellular location is the cytoplasm. The protein resides in the perinuclear region. It localises to the golgi apparatus. The protein localises to the membrane. It catalyses the reaction L-tyrosyl-[protein] + ATP = O-phospho-L-tyrosyl-[protein] + ADP + H(+). Its activity is regulated as follows. Subject to autoinhibition, mediated by intramolecular interactions between the SH2 domain and the C-terminal phosphotyrosine. Phosphorylation at Tyr-397 is required for optimal activity. Phosphorylated by CSK at Tyr-508; phosphorylation at Tyr-508 inhibits kinase activity. Kinase activity is modulated by dephosphorylation by PTPRC/CD45. Functionally, non-receptor tyrosine-protein kinase that transmits signals from cell surface receptors and plays an important role in the regulation of innate and adaptive immune responses, hematopoiesis, responses to growth factors and cytokines, integrin signaling, but also responses to DNA damage and genotoxic agents. Functions primarily as negative regulator, but can also function as activator, depending on the context. Required for the initiation of the B-cell response, but also for its down-regulation and termination. Plays an important role in the regulation of B-cell differentiation, proliferation, survival and apoptosis, and is important for immune self-tolerance. Acts downstream of several immune receptors, including the B-cell receptor, CD79A, CD79B, CD5, CD19, CD22, FCER1, FCGR2, FCGR1A, TLR2 and TLR4. Plays a role in the inflammatory response to bacterial lipopolysaccharide. Mediates the responses to cytokines and growth factors in hematopoietic progenitors, platelets, erythrocytes, and in mature myeloid cells, such as dendritic cells, neutrophils and eosinophils. Acts downstream of EPOR, KIT, MPL, the chemokine receptor CXCR4, as well as the receptors for IL3, IL5 and CSF2. Plays an important role in integrin signaling. Regulates cell proliferation, survival, differentiation, migration, adhesion, degranulation, and cytokine release. Involved in the regulation of endothelial activation, neutrophil adhesion and transendothelial migration. Down-regulates signaling pathways by phosphorylation of immunoreceptor tyrosine-based inhibitory motifs (ITIM), that then serve as binding sites for phosphatases, such as PTPN6/SHP-1, PTPN11/SHP-2 and INPP5D/SHIP-1, that modulate signaling by dephosphorylation of kinases and their substrates. Phosphorylates LIME1 in response to CD22 activation. Phosphorylates BTK, CBL, CD5, CD19, CD72, CD79A, CD79B, CSF2RB, DOK1, HCLS1, LILRB3/PIR-B, MS4A2/FCER1B, SYK and TEC. Promotes phosphorylation of SIRPA, PTPN6/SHP-1, PTPN11/SHP-2 and INPP5D/SHIP-1. Required for rapid phosphorylation of FER in response to FCER1 activation. Mediates KIT phosphorylation. Acts as an effector of EPOR (erythropoietin receptor) in controlling KIT expression and may play a role in erythroid differentiation during the switch between proliferation and maturation. Depending on the context, activates or inhibits several signaling cascades. Regulates phosphatidylinositol 3-kinase activity and AKT1 activation. Regulates activation of the MAP kinase signaling cascade, including activation of MAP2K1/MEK1, MAPK1/ERK2, MAPK3/ERK1, MAPK8/JNK1 and MAPK9/JNK2. Mediates activation of STAT5A and/or STAT5B. Phosphorylates LPXN on 'Tyr-72'. Kinase activity facilitates TLR4-TLR6 heterodimerization and signal initiation. Phosphorylates SCIMP on 'Tyr-96'; this enhances binding of SCIMP to TLR4, promoting the phosphorylation of TLR4, and a selective cytokine response to lipopolysaccharide in macrophages. Phosphorylates CLNK. Phosphorylates BCAR1/CAS and NEDD9/HEF1. In Rattus norvegicus (Rat), this protein is Tyrosine-protein kinase Lyn (Lyn).